A 159-amino-acid polypeptide reads, in one-letter code: NAD(P)H-quinone oxidoreductase subunit J, chloroplastic (159 aa).

This sequence belongs to the complex I 30 kDa subunit family. As to quaternary structure, NDH is composed of at least 16 different subunits, 5 of which are encoded in the nucleus.

Its subcellular location is the plastid. The protein resides in the chloroplast thylakoid membrane. The enzyme catalyses a plastoquinone + NADH + (n+1) H(+)(in) = a plastoquinol + NAD(+) + n H(+)(out). It carries out the reaction a plastoquinone + NADPH + (n+1) H(+)(in) = a plastoquinol + NADP(+) + n H(+)(out). In terms of biological role, NDH shuttles electrons from NAD(P)H:plastoquinone, via FMN and iron-sulfur (Fe-S) centers, to quinones in the photosynthetic chain and possibly in a chloroplast respiratory chain. The immediate electron acceptor for the enzyme in this species is believed to be plastoquinone. Couples the redox reaction to proton translocation, and thus conserves the redox energy in a proton gradient. This is NAD(P)H-quinone oxidoreductase subunit J, chloroplastic from Populus trichocarpa (Western balsam poplar).